Here is a 238-residue protein sequence, read N- to C-terminus: Zwei Ig domain protein zig-2 (238 aa).

A signal peptide spans 1–17; sequence MLKFTAISFVLLNAAES. Residues 31 to 130 form the Ig-like C2-type 1 domain; it reads PLLKFTRTPN…NGLTKLEHVA (100 aa). N-linked (GlcNAc...) asparagine glycosylation is found at Asn40 and Asn43. The cysteines at positions 54 and 117 are disulfide-linked. N-linked (GlcNAc...) asparagine glycosylation is found at Asn137, Asn206, and Asn216. An Ig-like C2-type 2 domain is found at 149 to 230; sequence PFISMTVDFR…NHFGETTAIT (82 aa). Cys170 and Cys217 are joined by a disulfide.

In terms of tissue distribution, expressed in PVT neurons and weakly in some head neurons.

It is found in the secreted. In terms of biological role, probably not involved in maintaining the position of ASI and ASH head neuron cell bodies and ventral nerve cord axons of PVQ, PVP, RMEV, AVK and HSN neurons. This Caenorhabditis elegans protein is Zwei Ig domain protein zig-2.